A 606-amino-acid chain; its full sequence is Pentatricopeptide repeat-containing protein At1g31920 (606 aa).

9 PPR repeats span residues 96–130 (CTFD…GNEP), 131–165 (DNFT…GLEA), 166–200 (DVFV…TAAS), 201–227 (WSSM…MCSE), 233–263 (EESG…LLRN), 268–298 (NIIV…MEKR), 299–333 (NNLT…GLEP), 334–368 (DHVV…GKVE), and 370–404 (TAEH…KNDV). The type E motif stretch occupies residues 405–480 (IWRTFLSQCR…TPGFSIVELK (76 aa)). Residues 481–511 (GKTHRFVSQDRSHPKCKEIYKMLHQMEWQLK) form a type E(+) motif region. Residues 512–606 (FEGYSPDLTQ…GGTCSCKDYW (95 aa)) form a type DYW motif region.

This sequence belongs to the PPR family. PCMP-H subfamily.

This is Pentatricopeptide repeat-containing protein At1g31920 (PCMP-H11) from Arabidopsis thaliana (Mouse-ear cress).